The primary structure comprises 357 residues: tRNA N6-adenosine threonylcarbamoyltransferase (357 aa).

Residues His113 and His117 each contribute to the Fe cation site. Residues 136–140, Asp169, Gly182, and Asn288 each bind substrate; that span reads LVSGG. Asp316 is a Fe cation binding site.

It belongs to the KAE1 / TsaD family. The cofactor is Fe(2+).

Its subcellular location is the cytoplasm. It carries out the reaction L-threonylcarbamoyladenylate + adenosine(37) in tRNA = N(6)-L-threonylcarbamoyladenosine(37) in tRNA + AMP + H(+). Functionally, required for the formation of a threonylcarbamoyl group on adenosine at position 37 (t(6)A37) in tRNAs that read codons beginning with adenine. Is involved in the transfer of the threonylcarbamoyl moiety of threonylcarbamoyl-AMP (TC-AMP) to the N6 group of A37, together with TsaE and TsaB. TsaD likely plays a direct catalytic role in this reaction. The sequence is that of tRNA N6-adenosine threonylcarbamoyltransferase from Gemmatimonas aurantiaca (strain DSM 14586 / JCM 11422 / NBRC 100505 / T-27).